Here is a 1759-residue protein sequence, read N- to C-terminus: Protein TIC 214 (1759 aa).

5 helical membrane passes run 23-45 (VVVGLYYGFMTTFSIGPSYLFLL), 64-84 (FITGQLIIFMSIYYAPLHLAL), 129-149 (IFFQNLLFQFFNPLFLPSSIF), 172-192 (IGWIIGHTFFMKWIEFLLICI), and 221-241 (IFVVFLFVTCLYYLGRIPPPF).

Belongs to the TIC214 family. In terms of assembly, part of the Tic complex.

The protein localises to the plastid. The protein resides in the chloroplast inner membrane. In terms of biological role, involved in protein precursor import into chloroplasts. May be part of an intermediate translocation complex acting as a protein-conducting channel at the inner envelope. This Phaseolus vulgaris (Kidney bean) protein is Protein TIC 214.